A 374-amino-acid chain; its full sequence is Phosphatidyl-myo-inositol mannosyltransferase (374 aa).

The GDP-alpha-D-mannose site is built by Y9 and G16. A 1,2-diacyl-sn-glycero-3-phospho-(1D-myo-inositol) contacts are provided by residues Q18, 62–63, and R68; that span reads YN. GDP-alpha-D-mannose is bound by residues R196, 201–202, 251–253, K256, 274–278, and E282; these read RK, VDD, and ESFGI.

It belongs to the glycosyltransferase group 1 family. Glycosyltransferase 4 subfamily. As to quaternary structure, monomer. Requires Mg(2+) as cofactor.

It localises to the cell membrane. The catalysed reaction is a 1,2-diacyl-sn-glycero-3-phospho-(1D-myo-inositol) + GDP-alpha-D-mannose = a 1,2-diacyl-sn-glycero-3-phospho-[alpha-D-mannopyranosyl-(1&lt;-&gt;6)-D-myo-inositol] + GDP + H(+). It participates in phospholipid metabolism; phosphatidylinositol metabolism. Functionally, involved in the biosynthesis of phosphatidyl-myo-inositol mannosides (PIM) which are early precursors in the biosynthesis of lipomannans (LM) and lipoarabinomannans (LAM). Catalyzes the addition of a mannosyl residue from GDP-D-mannose (GDP-Man) to the position 2 of the carrier lipid phosphatidyl-myo-inositol (PI) to generate a phosphatidyl-myo-inositol bearing an alpha-1,2-linked mannose residue (PIM1). This Mycobacterium leprae (strain TN) protein is Phosphatidyl-myo-inositol mannosyltransferase.